The primary structure comprises 320 residues: Serpentine receptor class gamma-15 (320 aa).

7 helical membrane-spanning segments follow: residues threonine 29–valine 49, glycine 57–isoleucine 77, phenylalanine 85–isoleucine 105, valine 151–proline 171, leucine 197–threonine 217, isoleucine 240–threonine 260, and leucine 268–phenylalanine 288.

The protein belongs to the nematode receptor-like protein srg family.

The protein resides in the membrane. The protein is Serpentine receptor class gamma-15 (srg-15) of Caenorhabditis elegans.